The following is a 294-amino-acid chain: Large ribosomal subunit protein uL4m (294 aa).

A disordered region spans residues 119 to 139 (EVSGGGRKPWQQKGSGRARHG). At Arg-147 the chain carries Omega-N-methylarginine.

Belongs to the universal ribosomal protein uL4 family. Component of the mitochondrial ribosome large subunit (39S) which comprises a 16S rRNA and about 50 distinct proteins. Interacts with MIEF1 upstream open reading frame protein.

It localises to the mitochondrion. The protein is Large ribosomal subunit protein uL4m (Mrpl4) of Mus musculus (Mouse).